The primary structure comprises 75 residues: Supwaprin-a (75 aa).

Positions 1–24 (MSSGGLLLLLGFLTLWAELTPVSG) are cleaved as a signal peptide. Residues 27–72 (RPKKPGLCPPRPQKPPCVRECKNDWSCPGEQKCCRYGCIFECRDPI) enclose the WAP domain. Cystine bridges form between Cys34-Cys60, Cys43-Cys64, Cys47-Cys59, and Cys53-Cys68.

Belongs to the venom waprin family. As to expression, expressed by the venom gland.

It localises to the secreted. In terms of biological role, damages membranes of susceptible bacteria. Has no hemolytic activity. Not toxic to mice. Does not inhibit the proteinases elastase and cathepsin G. This chain is Supwaprin-a, found in Austrelaps superbus (Lowland copperhead snake).